A 261-amino-acid polypeptide reads, in one-letter code: Imidazole glycerol phosphate synthase subunit HisF (261 aa).

Active-site residues include Asp-16 and Asp-135.

It belongs to the HisA/HisF family. As to quaternary structure, heterodimer of HisH and HisF.

It localises to the cytoplasm. The enzyme catalyses 5-[(5-phospho-1-deoxy-D-ribulos-1-ylimino)methylamino]-1-(5-phospho-beta-D-ribosyl)imidazole-4-carboxamide + L-glutamine = D-erythro-1-(imidazol-4-yl)glycerol 3-phosphate + 5-amino-1-(5-phospho-beta-D-ribosyl)imidazole-4-carboxamide + L-glutamate + H(+). It functions in the pathway amino-acid biosynthesis; L-histidine biosynthesis; L-histidine from 5-phospho-alpha-D-ribose 1-diphosphate: step 5/9. In terms of biological role, IGPS catalyzes the conversion of PRFAR and glutamine to IGP, AICAR and glutamate. The HisF subunit catalyzes the cyclization activity that produces IGP and AICAR from PRFAR using the ammonia provided by the HisH subunit. This is Imidazole glycerol phosphate synthase subunit HisF from Mycobacterium ulcerans (strain Agy99).